Here is a 364-residue protein sequence, read N- to C-terminus: MIIKNMDASTNVPYLWLPIFLYDEPILASQVIASIELILYSICLYIVVVSLKIFVQVRMFHLNFIILVAPFFGIWFELIIGKLITMCYQLSIFSIGNLEIRKFYVLWTDDSNKMLVVNSFEGLELLIIAGFMEYHYMFSVVFGAVAVAIERLAASVLIDNYESTNKIFIPIALTVFFQIIAITCSCLALFHKFTIITINGTWIVSCACSSIVFFLVERINLRWKAEMEHPRREKVYTISQRFQVKENIRALDLGKRLIFSELGTISIIGLIIATLLLELVPPSLVHIAENALFLNPFGICTVAMYSIPAWKKRYKNAFPSIFCFLMRLKNRKIDVQSMEPLEEFSKRIYEETNIHFAQLNESWT.

Transmembrane regions (helical) follow at residues 31 to 51 (VIAS…VVSL), 64 to 84 (FIIL…GKLI), 125 to 145 (LLII…FGAV), 167 to 187 (IFIP…CSCL), 195 to 215 (IITI…VFFL), 257 to 277 (LIFS…TLLL), and 290 to 310 (NALF…IPAW).

It belongs to the nematode receptor-like protein sre family.

The protein resides in the membrane. The chain is Serpentine receptor class epsilon-27 (sre-27) from Caenorhabditis elegans.